The chain runs to 103 residues: Isocitrate dehydrogenase [NAD] subunit beta, mitochondrial (103 aa).

The protein belongs to the isocitrate and isopropylmalate dehydrogenases family. In terms of assembly, heterooligomer of subunits alpha (IDH3A), beta (IDH3B), and gamma (IDH3G) in the apparent ratio of 2:1:1. The heterodimer containing one IDH3A and one IDH3B subunit and the heterodimer containing one IDH3A and one IDH3G subunit assemble into a heterotetramer (which contains two subunits of IDH3A, one of IDH3B and one of IDH3G) and further into the heterooctamer.

It is found in the mitochondrion. With respect to regulation, the heterotetramer and the heterodimer composed of IDH3A and IDH3G subunits can be allosterically activated by citrate (CIT) or/and ADP, and the two activators can act independently or synergistically. The heterodimer composed of IDH3A and IDH3B subunits cannot be allosterically regulated and the allosteric regulation of the heterotetramer is through the IDH3G subunit and not the IDH3B subunit. The IDH3G subunit contains the allosteric site which consists of a CIT-binding site and an ADP-binding site, and the binding of CIT and ADP causes conformational changes at the allosteric site which are transmitted to the active site in the catalytic subunit (IDH3A) through a cascade of conformational changes at the heterodimer interface, leading to stabilization of the isocitrate-binding at the active site and thus activation of the enzyme. ATP can activate the heterotetramer and the heterodimer composed of IDH3A and IDH3G subunits at low concentrations but inhibits their activities at high concentrations, whereas ATP exhibits only inhibitory effect on the heterodimer composed of IDH3A and IDH3B subunits. In terms of biological role, plays a structural role to facilitate the assembly and ensure the full activity of the enzyme catalyzing the decarboxylation of isocitrate (ICT) into alpha-ketoglutarate. The heterodimer composed of the alpha (IDH3A) and beta (IDH3B) subunits and the heterodimer composed of the alpha (IDH3A) and gamma (IDH3G) subunits, have considerable basal activity but the full activity of the heterotetramer (containing two subunits of IDH3A, one of IDH3B and one of IDH3G) requires the assembly and cooperative function of both heterodimers. The protein is Isocitrate dehydrogenase [NAD] subunit beta, mitochondrial (IDH3B) of Sus scrofa (Pig).